We begin with the raw amino-acid sequence, 120 residues long: Large ribosomal subunit protein uL18 (120 aa).

The protein belongs to the universal ribosomal protein uL18 family. As to quaternary structure, part of the 50S ribosomal subunit; part of the 5S rRNA/L5/L18/L25 subcomplex. Contacts the 5S and 23S rRNAs.

Its function is as follows. This is one of the proteins that bind and probably mediate the attachment of the 5S RNA into the large ribosomal subunit, where it forms part of the central protuberance. This Nitrobacter winogradskyi (strain ATCC 25391 / DSM 10237 / CIP 104748 / NCIMB 11846 / Nb-255) protein is Large ribosomal subunit protein uL18.